Consider the following 635-residue polypeptide: Threonine--tRNA ligase (635 aa).

Positions 1-61 (MINISFPDGS…DNDCKLRILT (61 aa)) constitute a TGS domain. The segment at 242-533 (DHRKLGRELD…LIEEYAGRFP (292 aa)) is catalytic. Positions 333, 384, and 510 each coordinate Zn(2+).

The protein belongs to the class-II aminoacyl-tRNA synthetase family. Homodimer. Zn(2+) is required as a cofactor.

It localises to the cytoplasm. The catalysed reaction is tRNA(Thr) + L-threonine + ATP = L-threonyl-tRNA(Thr) + AMP + diphosphate + H(+). In terms of biological role, catalyzes the attachment of threonine to tRNA(Thr) in a two-step reaction: L-threonine is first activated by ATP to form Thr-AMP and then transferred to the acceptor end of tRNA(Thr). Also edits incorrectly charged L-seryl-tRNA(Thr). The chain is Threonine--tRNA ligase from Rickettsia peacockii (strain Rustic).